The sequence spans 428 residues: MVVKVEKKDKNIVELEIEVEAAKFEEAVQKSYLKNSKKFTVPGFRKGKAPRSIIERYYGKEVFYEDAINIVCADAYDKAIEENDIFPVDRPTISIKKIGEGENLVFTASVTVKPEVELGEYKGVEVEKVEVNVTDEDVEKELKAVAEKNARIMSVEDRGIQKGDIVDIDFEGFIDGEPFEGGKASGYVLEVGSGTFIDGFEDQLIGGRPGDDIEVNVTFPEDYGKKELAGKPALFKVIVNDVKVKELPAIDDEFAKDVSEFDTLEEYKESIRKKLTEAAEHRAKHELEDKVVAKVVENAQVDIPDVMIERQIDSMVRDYNMRLNYQGLDLDKYLMIMGIDYQTFRNQLRDRAHDDIKRQLVLEKVAKVEDIKVSDEEINEEAEKIAKSYNMEHEDFKKHLRDDDIEYIKATILFKKAVDFLVQNAKIL.

The PPIase FKBP-type domain maps to 163–248 (GDIVDIDFEG…VNDVKVKELP (86 aa)).

Belongs to the FKBP-type PPIase family. Tig subfamily.

It localises to the cytoplasm. The enzyme catalyses [protein]-peptidylproline (omega=180) = [protein]-peptidylproline (omega=0). Involved in protein export. Acts as a chaperone by maintaining the newly synthesized protein in an open conformation. Functions as a peptidyl-prolyl cis-trans isomerase. The polypeptide is Trigger factor (Acetivibrio thermocellus (strain ATCC 27405 / DSM 1237 / JCM 9322 / NBRC 103400 / NCIMB 10682 / NRRL B-4536 / VPI 7372) (Clostridium thermocellum)).